A 591-amino-acid polypeptide reads, in one-letter code: V-type ATP synthase alpha chain (591 aa).

Residue 242–249 (GPFGAGKT) coordinates ATP.

Belongs to the ATPase alpha/beta chains family.

It catalyses the reaction ATP + H2O + 4 H(+)(in) = ADP + phosphate + 5 H(+)(out). Produces ATP from ADP in the presence of a proton gradient across the membrane. The V-type alpha chain is a catalytic subunit. This Chlamydia pneumoniae (Chlamydophila pneumoniae) protein is V-type ATP synthase alpha chain (atpA).